The sequence spans 203 residues: Proteasome subunit beta 2 (203 aa).

Residues 1–9 (MGEEVQIGA) constitute a propeptide, removed in mature form; by autocatalysis. The active-site Nucleophile is T10.

This sequence belongs to the peptidase T1B family. In terms of assembly, the 20S proteasome core is composed of 14 alpha and 14 beta subunits that assemble into four stacked heptameric rings, resulting in a barrel-shaped structure. The two inner rings, each composed of seven catalytic beta subunits, are sandwiched by two outer rings, each composed of seven alpha subunits. The catalytic chamber with the active sites is on the inside of the barrel. Has a gated structure, the ends of the cylinder being occluded by the N-termini of the alpha-subunits. Is capped at one or both ends by the proteasome regulatory ATPase, PAN.

The protein resides in the cytoplasm. The catalysed reaction is Cleavage of peptide bonds with very broad specificity.. With respect to regulation, the formation of the proteasomal ATPase PAN-20S proteasome complex, via the docking of the C-termini of PAN into the intersubunit pockets in the alpha-rings, triggers opening of the gate for substrate entry. Interconversion between the open-gate and close-gate conformations leads to a dynamic regulation of the 20S proteasome proteolysis activity. Its function is as follows. Component of the proteasome core, a large protease complex with broad specificity involved in protein degradation. In Pyrobaculum arsenaticum (strain DSM 13514 / JCM 11321 / PZ6), this protein is Proteasome subunit beta 2.